Consider the following 295-residue polypeptide: Virginiamycin B lyase (295 aa).

Residue histidine 227 participates in substrate binding. Glutamate 267 contributes to the Mg(2+) binding site. Histidine 269 functions as the Proton acceptor in the catalytic mechanism. A Mg(2+)-binding site is contributed by glutamate 284.

It belongs to the Vgb family. As to quaternary structure, monomer. Mg(2+) is required as a cofactor.

Functionally, inactivates the type B streptogramin antibiotics by linearizing the lactone ring at the ester linkage, generating a free phenylglycine carboxylate and converting the threonyl moiety into 2-amino-butenoic acid. The protein is Virginiamycin B lyase of Bacillus licheniformis (strain ATCC 14580 / DSM 13 / JCM 2505 / CCUG 7422 / NBRC 12200 / NCIMB 9375 / NCTC 10341 / NRRL NRS-1264 / Gibson 46).